A 399-amino-acid polypeptide reads, in one-letter code: Glucosamine kinase (399 aa).

ATP-binding positions include K98, 149-151 (EYL), and D156. D262 contributes to the D-glucosamine binding site. Mg(2+)-binding residues include Q267, D279, and D281. Residues 366-381 (QVLREIIYAARHLPRW) carry the Substrate specificity determinant motif motif. Position 370 (E370) interacts with D-glucosamine.

It belongs to the actinobacterial glucosamine kinase family. As to quaternary structure, monomer. Mg(2+) is required as a cofactor.

The catalysed reaction is D-glucosamine + ATP = D-glucosamine 6-phosphate + ADP + H(+). Catalyzes the ATP-dependent phosphorylation of D-glucosamine (GlcN) to D-glucosamine 6-phosphate. May be involved in the phosphorylation of acquired extracellular GlcN derived from the hydrolysis of chitosan, i.e., in the incorporation of exogenous GlcN into the bacterial GlcNAc metabolism. Is unable to phosphorylate maltose. The protein is Glucosamine kinase of Mycolicibacterium smegmatis (strain ATCC 700084 / mc(2)155) (Mycobacterium smegmatis).